Here is a 248-residue protein sequence, read N- to C-terminus: Probable transcriptional regulatory protein FTM_1203 (248 aa).

This sequence belongs to the TACO1 family.

The protein localises to the cytoplasm. This is Probable transcriptional regulatory protein FTM_1203 from Francisella tularensis subsp. mediasiatica (strain FSC147).